A 360-amino-acid chain; its full sequence is S-adenosylmethionine:tRNA ribosyltransferase-isomerase (360 aa).

Belongs to the QueA family. In terms of assembly, monomer.

Its subcellular location is the cytoplasm. It catalyses the reaction 7-aminomethyl-7-carbaguanosine(34) in tRNA + S-adenosyl-L-methionine = epoxyqueuosine(34) in tRNA + adenine + L-methionine + 2 H(+). The protein operates within tRNA modification; tRNA-queuosine biosynthesis. Transfers and isomerizes the ribose moiety from AdoMet to the 7-aminomethyl group of 7-deazaguanine (preQ1-tRNA) to give epoxyqueuosine (oQ-tRNA). This is S-adenosylmethionine:tRNA ribosyltransferase-isomerase from Burkholderia pseudomallei (strain 1106a).